A 309-amino-acid polypeptide reads, in one-letter code: Cyclin-dependent kinase B1-1 (309 aa).

A Protein kinase domain is found at 4–301; the sequence is YEKLEKVGEG…AKTALDHPYF (298 aa). ATP-binding positions include 10–18 and K33; that span reads VGEGTYGKV. Y15 carries the post-translational modification Phosphotyrosine. Catalysis depends on D142, which acts as the Proton acceptor. Residue T176 is modified to Phosphothreonine; by CAK.

It belongs to the protein kinase superfamily. CMGC Ser/Thr protein kinase family. CDC2/CDKX subfamily. As to quaternary structure, interacts with CKS1. Interacts with CYCU3-1. Interacts with SIM, SMR1 and SMR2. As to expression, highly expressed in guard cells and stomatal precursor cells of cotyledons. Expressed in roots, stems, flowers and siliques.

It is found in the nucleus. It catalyses the reaction L-seryl-[protein] + ATP = O-phospho-L-seryl-[protein] + ADP + H(+). The catalysed reaction is L-threonyl-[protein] + ATP = O-phospho-L-threonyl-[protein] + ADP + H(+). It carries out the reaction [DNA-directed RNA polymerase] + ATP = phospho-[DNA-directed RNA polymerase] + ADP + H(+). Its activity is regulated as follows. Phosphorylation at Thr-14 or Tyr-15 inactivates the enzyme, while phosphorylation at Thr-176 activates it. May control G2/M (mitosis) phase progression. Plays a role in regulating seedling growth in darkness via regulation of hypocotyl cell elongation and cotyledon cell development. Plays a role in stomatal development. Required to suppress endoreduplication. Together with CDKB1-2, promotes both the last division in the stomatal cell lineage as well as the number of stomata. In collaboration with MYB124 and MYB88, restrict the G1/S transition and chloroplast and nuclear number during stomatal formation, and normally maintain fate and developmental progression throughout the stomatal cell lineage. In Arabidopsis thaliana (Mouse-ear cress), this protein is Cyclin-dependent kinase B1-1 (CDKB1-1).